The chain runs to 448 residues: Putative F-box/LRR-repeat protein At5g25860 (448 aa).

Residues 11 to 58 (RDAVNCLPDEILAKILSYLPTKRAVSTSLISKRWRNLFALMIQLFESQ) enclose the F-box domain. LRR repeat units lie at residues 82–106 (QESF…SILC), 185–214 (FLHA…FLHD), 215–240 (LRGY…TVHF), 310–341 (TLSL…YFES), and 342–367 (NEKE…VLKG).

The sequence is that of Putative F-box/LRR-repeat protein At5g25860 from Arabidopsis thaliana (Mouse-ear cress).